A 121-amino-acid polypeptide reads, in one-letter code: Protein GAT4 (121 aa).

Residues 29–48 (EAQHGLPRNADSQPARPRTG) form a disordered region. Residues 53–79 (CGQCGEIKTSLQWREGPNGAACLCNAC) form a GATA-type zinc finger.

This Saccharomyces cerevisiae (strain ATCC 204508 / S288c) (Baker's yeast) protein is Protein GAT4 (GAT4).